Reading from the N-terminus, the 770-residue chain is MAMGKYSRVDGKKSSSYGLTITIVLLLSLCLVGTWMFMSSWSAPADSAGYSSTDTAKDVSKNDLRKEEGDRDPKNFSDEKNEENEAATENNQVKTDSENSAEGNQVNESSGEKTEAGEERKESDDNNGDGDGEKEKNVKEVGSESDETTQKEKTQLEESTEENKSEDGNGNEEKAEENASETEESTEKSSKEVFPAGDQAEITKESSTGDGAWSTQLVESQNEKKAQQSSISKDQSSYGWKTCNVTAGPDYIPCLDNWQAIKKLHTTMHYEHRERHCPEESPHCLVSLPDGYKRSIKWPKSREKIWYNNVPHTKLAEIKGHQNWVKMSGEHLTFPGGGTQFKNGALHYIDFIQQSHPAIAWGNRTRVILDVGCGVASFGGYLFERDVLALSFAPKDEHEAQVQFALERGIPAMLNVMGTKRLPFPGSVFDLIHCARCRVPWHIEGGKLLLELNRALRPGGFFVWSATPVYRKNEEDSGIWKAMSELTKAMCWKLVTIKKDKLNEVGAAIYQKPTSNKCYNKRPQNEPPLCKDSDDQNAAWNVPLEACMHKVTEDSSKRGAVWPNMWPERVETAPEWLDSQEGVYGKPAPEDFTADQEKWKTIVSKAYLNDMGIDWSNVRNVMDMRAVYGGFAAALKDLKLWVMNVVPVDAPDTLPIIYERGLFGIYHDWCESFNTYPRTYDLLHADHLFSTLRKRCNLVSVMAEIDRILRPQGTFIIRDDMETLGEVEKMVKSMKWKVKMTQSKDNEGLLSIEKSWWRPEETETIKSAIA.

The Cytoplasmic portion of the chain corresponds to 1–17 (MAMGKYSRVDGKKSSSY). The helical; Signal-anchor for type II membrane protein transmembrane segment at 18–38 (GLTITIVLLLSLCLVGTWMFM) threads the bilayer. Residues 39 to 770 (SSWSAPADSA…ETETIKSAIA (732 aa)) lie on the Lumenal side of the membrane. Residues 44-238 (PADSAGYSST…SSISKDQSSY (195 aa)) form a disordered region. Residues 55–79 (TAKDVSKNDLRKEEGDRDPKNFSDE) are compositionally biased toward basic and acidic residues. Asn75 and Asn107 each carry an N-linked (GlcNAc...) asparagine glycan. The span at 92–109 (QVKTDSENSAEGNQVNES) shows a compositional bias: polar residues. Composition is skewed to basic and acidic residues over residues 110–124 (SGEKTEAGEERKESD) and 131–177 (DGEK…KAEE). 2 N-linked (GlcNAc...) asparagine glycosylation sites follow: Asn163 and Asn178. Composition is skewed to polar residues over residues 205–220 (ESSTGDGAWSTQLVES) and 227–238 (QQSSISKDQSSY). Residues Asn244 and Asn363 are each glycosylated (N-linked (GlcNAc...) asparagine).

This sequence belongs to the methyltransferase superfamily.

Its subcellular location is the golgi apparatus membrane. The polypeptide is Probable methyltransferase PMT25 (Arabidopsis thaliana (Mouse-ear cress)).